We begin with the raw amino-acid sequence, 212 residues long: N-(5'-phosphoribosyl)anthranilate isomerase (212 aa).

The protein belongs to the TrpF family.

It catalyses the reaction N-(5-phospho-beta-D-ribosyl)anthranilate = 1-(2-carboxyphenylamino)-1-deoxy-D-ribulose 5-phosphate. It participates in amino-acid biosynthesis; L-tryptophan biosynthesis; L-tryptophan from chorismate: step 3/5. The polypeptide is N-(5'-phosphoribosyl)anthranilate isomerase (trpF) (Cereibacter sphaeroides (strain ATCC 17023 / DSM 158 / JCM 6121 / CCUG 31486 / LMG 2827 / NBRC 12203 / NCIMB 8253 / ATH 2.4.1.) (Rhodobacter sphaeroides)).